We begin with the raw amino-acid sequence, 309 residues long: Oxygen-dependent coproporphyrinogen-III oxidase (309 aa).

Ser-94 is a binding site for substrate. A divalent metal cation contacts are provided by His-98 and His-108. The Proton donor role is filled by His-108. A substrate-binding site is contributed by 110–112 (NVR). The a divalent metal cation site is built by His-147 and His-177. An important for dimerization region spans residues 242-277 (YVEFNLVWDRGTLFGLQTGGRTESILMSLPPLVRWE). Residue 260–262 (GGR) coordinates substrate.

It belongs to the aerobic coproporphyrinogen-III oxidase family. As to quaternary structure, homodimer. A divalent metal cation is required as a cofactor.

It is found in the cytoplasm. The enzyme catalyses coproporphyrinogen III + O2 + 2 H(+) = protoporphyrinogen IX + 2 CO2 + 2 H2O. Its pathway is porphyrin-containing compound metabolism; protoporphyrin-IX biosynthesis; protoporphyrinogen-IX from coproporphyrinogen-III (O2 route): step 1/1. Its function is as follows. Involved in the heme biosynthesis. Catalyzes the aerobic oxidative decarboxylation of propionate groups of rings A and B of coproporphyrinogen-III to yield the vinyl groups in protoporphyrinogen-IX. In Yersinia pseudotuberculosis serotype O:1b (strain IP 31758), this protein is Oxygen-dependent coproporphyrinogen-III oxidase.